The following is a 255-amino-acid chain: Hydroxyacylglutathione hydrolase (255 aa).

7 residues coordinate Zn(2+): H56, H58, D60, H61, H114, D133, and H171.

The protein belongs to the metallo-beta-lactamase superfamily. Glyoxalase II family. As to quaternary structure, monomer. The cofactor is Zn(2+).

It carries out the reaction an S-(2-hydroxyacyl)glutathione + H2O = a 2-hydroxy carboxylate + glutathione + H(+). It participates in secondary metabolite metabolism; methylglyoxal degradation; (R)-lactate from methylglyoxal: step 2/2. Thiolesterase that catalyzes the hydrolysis of S-D-lactoyl-glutathione to form glutathione and D-lactic acid. The polypeptide is Hydroxyacylglutathione hydrolase (Fuscovulum blasticum (Rhodobacter blasticus)).